A 110-amino-acid polypeptide reads, in one-letter code: Acylphosphatase (110 aa).

The Acylphosphatase-like domain maps to 21 to 108 (TRRYLVTGRV…TNLKSFRIEG (88 aa)). Catalysis depends on residues arginine 36 and asparagine 54.

Belongs to the acylphosphatase family.

It carries out the reaction an acyl phosphate + H2O = a carboxylate + phosphate + H(+). The sequence is that of Acylphosphatase (acyP) from Koribacter versatilis (strain Ellin345).